A 146-amino-acid chain; its full sequence is Cytochrome c' (146 aa).

Residues 1-21 form the signal peptide; it reads MKLRIATIAGLVVLGSGFAVA. Heme c contacts are provided by arginine 29, threonine 86, alanine 87, cysteine 134, cysteine 137, and histidine 138.

Monomer. Binds 1 heme c group covalently per subunit.

Cytochrome c' is the most widely occurring bacterial c-type cytochrome. Cytochromes c' are high-spin proteins and the heme has no sixth ligand. Their exact function is not known. This chain is Cytochrome c' (cycA), found in Rhodopseudomonas palustris (strain ATCC BAA-98 / CGA009).